The chain runs to 475 residues: Sulfate adenylyltransferase subunit 1 (475 aa).

One can recognise a tr-type G domain in the interval lysine 25–arginine 239. Positions glycine 34–serine 41 are G1. Glycine 34 to serine 41 serves as a coordination point for GTP. The G2 stretch occupies residues glycine 92 to aspartate 96. The interval aspartate 113–glycine 116 is G3. GTP-binding positions include aspartate 113 to histidine 117 and asparagine 168 to aspartate 171. A G4 region spans residues asparagine 168–aspartate 171. The tract at residues serine 206–leucine 208 is G5.

This sequence belongs to the TRAFAC class translation factor GTPase superfamily. Classic translation factor GTPase family. CysN/NodQ subfamily. Heterodimer composed of CysD, the smaller subunit, and CysN.

It carries out the reaction sulfate + ATP + H(+) = adenosine 5'-phosphosulfate + diphosphate. It functions in the pathway sulfur metabolism; hydrogen sulfide biosynthesis; sulfite from sulfate: step 1/3. In terms of biological role, with CysD forms the ATP sulfurylase (ATPS) that catalyzes the adenylation of sulfate producing adenosine 5'-phosphosulfate (APS) and diphosphate, the first enzymatic step in sulfur assimilation pathway. APS synthesis involves the formation of a high-energy phosphoric-sulfuric acid anhydride bond driven by GTP hydrolysis by CysN coupled to ATP hydrolysis by CysD. This chain is Sulfate adenylyltransferase subunit 1, found in Escherichia coli O17:K52:H18 (strain UMN026 / ExPEC).